A 212-amino-acid polypeptide reads, in one-letter code: Adenylate kinase (212 aa).

ATP is bound at residue 10–15 (GAGKGT). Residues 30 to 59 (STGDMFRAAMANQTEMGVLAKSYIDKGELV) form an NMP region. AMP is bound by residues T31, R36, 57–59 (ELV), 86–89 (GYPR), and Q93. The interval 127–159 (GRIIHRQTGETFHKVFNPPANYNEEDYYQREDD) is LID. ATP-binding positions include R128 and 137–138 (TF). AMP contacts are provided by R156 and R167. Q195 provides a ligand contact to ATP.

Belongs to the adenylate kinase family. As to quaternary structure, monomer.

It localises to the cytoplasm. The enzyme catalyses AMP + ATP = 2 ADP. It participates in purine metabolism; AMP biosynthesis via salvage pathway; AMP from ADP: step 1/1. Functionally, catalyzes the reversible transfer of the terminal phosphate group between ATP and AMP. Plays an important role in cellular energy homeostasis and in adenine nucleotide metabolism. The protein is Adenylate kinase of Streptococcus gordonii (strain Challis / ATCC 35105 / BCRC 15272 / CH1 / DL1 / V288).